The following is a 436-amino-acid chain: Trigger factor (436 aa).

The 86-residue stretch at G163–P248 folds into the PPIase FKBP-type domain.

The protein belongs to the FKBP-type PPIase family. Tig subfamily.

It localises to the cytoplasm. The catalysed reaction is [protein]-peptidylproline (omega=180) = [protein]-peptidylproline (omega=0). Functionally, involved in protein export. Acts as a chaperone by maintaining the newly synthesized protein in an open conformation. Functions as a peptidyl-prolyl cis-trans isomerase. This chain is Trigger factor, found in Albidiferax ferrireducens (strain ATCC BAA-621 / DSM 15236 / T118) (Rhodoferax ferrireducens).